Here is a 67-residue protein sequence, read N- to C-terminus: Large ribosomal subunit protein bL32 (67 aa).

Over residues 1 to 19 (MAVPKRKMSRSNTRARRSQ) the composition is skewed to basic residues. Positions 1-21 (MAVPKRKMSRSNTRARRSQWK) are disordered.

Belongs to the bacterial ribosomal protein bL32 family.

The sequence is that of Large ribosomal subunit protein bL32 from Clavibacter michiganensis subsp. michiganensis (strain NCPPB 382).